The sequence spans 236 residues: Probable ascorbate-specific transmembrane electron transporter 2 (236 aa).

The Cytoplasmic segment spans residues 1 to 11; the sequence is MAAGLGVKAAP. A helical membrane pass occupies residues 12-32; the sequence is FTYVAHALAVAAAVMVLVWCI. Residues 15 to 219 form the Cytochrome b561 domain; sequence VAHALAVAAA…FGAAVVVAAV (205 aa). Residues 33 to 53 are Extracellular-facing; the sequence is SFRGGLAFEADNKNLIFNVHP. Histidine 52 is a binding site for heme b. Residues 54-74 form a helical membrane-spanning segment; the sequence is VLMLIGYIILGSEAIMIYKIF. Residue 67–75 coordinates L-ascorbate; it reads AIMIYKIFP. Residues 75–84 are Cytoplasmic-facing; the sequence is PKLNHDTTKL. Residues 85-105 form a helical membrane-spanning segment; sequence IHLILHAIAIVLGAVGIYCAF. Residues histidine 86 and histidine 120 each coordinate heme b. At 106–122 the chain is on the extracellular side; sequence KFHNESGIANLYSLHSW. 116-125 contacts monodehydro-L-ascorbate radical; it reads LYSLHSWLGI. The helical transmembrane segment at 123 to 143 threads the bilayer; the sequence is LGIGTISLYGIQWIFGFVAFF. The Cytoplasmic portion of the chain corresponds to 144 to 153; sequence YPGAAPHVRR. Residues 154 to 174 traverse the membrane as a helical segment; it reads GALPWHVLFGLFVYVLTLATA. A heme b-binding site is contributed by histidine 159. Over 175-196 the chain is Extracellular; sequence ELGLLEKLTFLQSSGLDKYGAE. Residues 197–217 traverse the membrane as a helical segment; sequence AFLVNFTGLVVALFGAAVVVA. The Cytoplasmic portion of the chain corresponds to 218–236; sequence AVAPAHVEEPEGYAPIPVN.

Heme b is required as a cofactor.

Its subcellular location is the membrane. Its function is as follows. Two-heme-containing cytochrome. Catalyzes ascorbate-dependent trans-membrane electron transfer by utilizing a concerted H(+)/e(-) transfer mechanism. This chain is Probable ascorbate-specific transmembrane electron transporter 2, found in Oryza sativa subsp. japonica (Rice).